The sequence spans 249 residues: Probable transcriptional regulatory protein Meso_3192 (249 aa).

It belongs to the TACO1 family.

The protein localises to the cytoplasm. This Chelativorans sp. (strain BNC1) protein is Probable transcriptional regulatory protein Meso_3192.